Reading from the N-terminus, the 198-residue chain is Probable chemoreceptor glutamine deamidase CheD (198 aa).

Belongs to the CheD family.

It carries out the reaction L-glutaminyl-[protein] + H2O = L-glutamyl-[protein] + NH4(+). In terms of biological role, probably deamidates glutamine residues to glutamate on methyl-accepting chemotaxis receptors (MCPs), playing an important role in chemotaxis. The protein is Probable chemoreceptor glutamine deamidase CheD of Xanthomonas axonopodis pv. citri (strain 306).